The sequence spans 210 residues: Late histone H1 (210 aa).

Disordered regions lie at residues 1–21 (MSAA…HPPT) and 86–210 (SFKL…AAKK). One can recognise an H15 domain in the interval 17–91 (AHPPTSQMVV…GASGSFKLGK (75 aa)). Residues 104 to 113 (AAAKKAKLAA) show a composition bias toward basic residues. Residues 114 to 123 (KKKEQKEKKA) show a composition bias toward basic and acidic residues. Residues 124-210 (AKTKARKEKL…KPAAKKAAKK (87 aa)) show a composition bias toward basic residues.

Belongs to the histone H1/H5 family.

The protein localises to the nucleus. Its subcellular location is the chromosome. In terms of biological role, histones H1 are necessary for the condensation of nucleosome chains into higher-order structures. This is Late histone H1 from Lytechinus pictus (Painted sea urchin).